Reading from the N-terminus, the 613-residue chain is Dihydroxy-acid dehydratase (613 aa).

Mg(2+) is bound at residue Asp81. [2Fe-2S] cluster is bound at residue Cys122. Residues Asp123 and Lys124 each contribute to the Mg(2+) site. Lys124 carries the post-translational modification N6-carboxylysine. Cys197 contacts [2Fe-2S] cluster. Glu493 contributes to the Mg(2+) binding site. Residue Ser519 is the Proton acceptor of the active site.

The protein belongs to the IlvD/Edd family. Homodimer. It depends on [2Fe-2S] cluster as a cofactor. Mg(2+) is required as a cofactor.

The catalysed reaction is (2R)-2,3-dihydroxy-3-methylbutanoate = 3-methyl-2-oxobutanoate + H2O. It catalyses the reaction (2R,3R)-2,3-dihydroxy-3-methylpentanoate = (S)-3-methyl-2-oxopentanoate + H2O. It participates in amino-acid biosynthesis; L-isoleucine biosynthesis; L-isoleucine from 2-oxobutanoate: step 3/4. The protein operates within amino-acid biosynthesis; L-valine biosynthesis; L-valine from pyruvate: step 3/4. Functions in the biosynthesis of branched-chain amino acids. Catalyzes the dehydration of (2R,3R)-2,3-dihydroxy-3-methylpentanoate (2,3-dihydroxy-3-methylvalerate) into 2-oxo-3-methylpentanoate (2-oxo-3-methylvalerate) and of (2R)-2,3-dihydroxy-3-methylbutanoate (2,3-dihydroxyisovalerate) into 2-oxo-3-methylbutanoate (2-oxoisovalerate), the penultimate precursor to L-isoleucine and L-valine, respectively. The protein is Dihydroxy-acid dehydratase of Corynebacterium glutamicum (strain R).